A 360-amino-acid polypeptide reads, in one-letter code: Phospho-N-acetylmuramoyl-pentapeptide-transferase (360 aa).

Helical transmembrane passes span 27 to 47 (GAFL…INVL), 69 to 89 (VGTP…STLM), 93 to 113 (WDNP…LIGF), 134 to 154 (LLLG…NHPA), 168 to 188 (VLLN…VGAA), 199 to 219 (GLAI…AYAV), 239 to 259 (ILIF…YNAP), 262 to 282 (AVFM…AIAI), 288 to 308 (LVLA…IIQV), and 337 to 357 (TIVI…LATL).

This sequence belongs to the glycosyltransferase 4 family. MraY subfamily. Mg(2+) serves as cofactor.

It is found in the cell inner membrane. It catalyses the reaction UDP-N-acetyl-alpha-D-muramoyl-L-alanyl-gamma-D-glutamyl-meso-2,6-diaminopimeloyl-D-alanyl-D-alanine + di-trans,octa-cis-undecaprenyl phosphate = di-trans,octa-cis-undecaprenyl diphospho-N-acetyl-alpha-D-muramoyl-L-alanyl-D-glutamyl-meso-2,6-diaminopimeloyl-D-alanyl-D-alanine + UMP. It participates in cell wall biogenesis; peptidoglycan biosynthesis. Functionally, catalyzes the initial step of the lipid cycle reactions in the biosynthesis of the cell wall peptidoglycan: transfers peptidoglycan precursor phospho-MurNAc-pentapeptide from UDP-MurNAc-pentapeptide onto the lipid carrier undecaprenyl phosphate, yielding undecaprenyl-pyrophosphoryl-MurNAc-pentapeptide, known as lipid I. The protein is Phospho-N-acetylmuramoyl-pentapeptide-transferase of Ruegeria sp. (strain TM1040) (Silicibacter sp.).